Consider the following 254-residue polypeptide: uncharacterized protein (254 aa).

8 helical membrane passes run leucine 41–isoleucine 61, isoleucine 64–phenylalanine 84, isoleucine 91–leucine 111, leucine 125–alanine 145, proline 146–phenylalanine 166, phenylalanine 172–leucine 192, methionine 204–proline 224, and leucine 232–leucine 252.

It belongs to the TatC family.

Its subcellular location is the plastid. It is found in the chloroplast membrane. This is an uncharacterized protein from Pyropia yezoensis (Susabi-nori).